Reading from the N-terminus, the 560-residue chain is Membrane protein insertase YidC (560 aa).

The helical transmembrane segment at 7–27 (ILIVALAIVSYVMVLKWNQDY) threads the bilayer. A disordered region spans residues 43 to 72 (APAIPDTPLGNNASASADVPSANGETSAPL). Transmembrane regions (helical) follow at residues 367–387 (IVGN…GIFF), 437–457 (LGGC…YWVL), 468–488 (FMLW…PIIM), and 515–535 (PIIF…YWVV).

This sequence belongs to the OXA1/ALB3/YidC family. Type 1 subfamily. As to quaternary structure, interacts with the Sec translocase complex via SecD. Specifically interacts with transmembrane segments of nascent integral membrane proteins during membrane integration.

The protein resides in the cell inner membrane. Functionally, required for the insertion and/or proper folding and/or complex formation of integral membrane proteins into the membrane. Involved in integration of membrane proteins that insert both dependently and independently of the Sec translocase complex, as well as at least some lipoproteins. Aids folding of multispanning membrane proteins. The sequence is that of Membrane protein insertase YidC from Pseudomonas fluorescens (strain SBW25).